Reading from the N-terminus, the 381-residue chain is Cytochrome b (381 aa).

The next 4 membrane-spanning stretches (helical) occupy residues 34–54 (FGSL…FLAM), 78–99 (WLIR…YLHI), 114–134 (WNTG…GYVL), and 179–199 (FFTF…VHLL). Residues H84 and H98 each contribute to the heme b site. H183 and H197 together coordinate heme b. H202 is an a ubiquinone binding site. The next 4 helical transmembrane spans lie at 227-247 (YKDL…TLFS), 289-309 (LGGV…PTLH), 321-341 (LTQI…WIGG), and 348-368 (FIII…LLMP).

This sequence belongs to the cytochrome b family. As to quaternary structure, the cytochrome bc1 complex contains 3 respiratory subunits (MT-CYB, CYC1 and UQCRFS1), 2 core proteins (UQCRC1 and UQCRC2) and probably 6 low-molecular weight proteins. Requires heme b as cofactor.

It localises to the mitochondrion inner membrane. In terms of biological role, component of the ubiquinol-cytochrome c reductase complex (complex III or cytochrome b-c1 complex) that is part of the mitochondrial respiratory chain. The b-c1 complex mediates electron transfer from ubiquinol to cytochrome c. Contributes to the generation of a proton gradient across the mitochondrial membrane that is then used for ATP synthesis. The chain is Cytochrome b (MT-CYB) from Chelonia mydas (Green sea-turtle).